We begin with the raw amino-acid sequence, 65 residues long: Kassorin-M (65 aa).

Residues Met1–Ala22 form the signal peptide. Positions Asp23 to Arg51 are excised as a propeptide. Positions Asp24–Arg45 are disordered. Leu64 carries the post-translational modification Leucine amide.

Belongs to the frog skin active peptide (FSAP) family. Brevinin subfamily. In terms of tissue distribution, expressed by the skin glands.

It is found in the secreted. Its function is as follows. Induces contraction of smooth muscle in isolated guinea pig urinary bladder (EC50=4.66 nM). Has no antimicrobial activity against the Gram-positive bacterium S.aureus, the Gram-negative bacterium E.coli and the yeast C.albicans. Elicits histamine release from rat peritoneal mast cells. The sequence is that of Kassorin-M from Phlyctimantis maculatus (Red-legged running frog).